Consider the following 805-residue polypeptide: Arginine/serine-rich protein PNISR (805 aa).

Residues 74–88 (PNNHGNFQGDSNFNR) show a composition bias toward polar residues. Disordered regions lie at residues 74–331 (PNNH…EEKE) and 382–805 (LTGL…SRSR). 2 stretches are compositionally biased toward pro residues: residues 100 to 115 (PPHP…PTPG) and 183 to 195 (YWQP…PAPP). The segment covering 197–210 (NRRERPSSFRDRQR) has biased composition (basic and acidic residues). Ser204 and Ser211 each carry phosphoserine. Lys218 participates in a covalent cross-link: Glycyl lysine isopeptide (Lys-Gly) (interchain with G-Cter in SUMO2). Residues 237 to 276 (REGLEKMEREKQKKLEKERMEQQRSQLSKKEKKATEDAEG) adopt a coiled-coil conformation. The segment covering 238–258 (EGLEKMEREKQKKLEKERMEQ) has biased composition (basic and acidic residues). Phosphoserine occurs at positions 290, 304, 313, and 321. Residues 290-299 (SDEEEEDTEN) show a composition bias toward acidic residues. The span at 384 to 393 (GLGGLGGYGS) shows a compositional bias: gly residues. Residues 421-463 (QKQEAFWRKEKEQQLLHDKQMEEEKQQTERVTKEMNEFIHKEQ) are compositionally biased toward basic and acidic residues. Positions 429–461 (KEKEQQLLHDKQMEEEKQQTERVTKEMNEFIHK) form a coiled coil. Residues Ser465 and Ser467 each carry the phosphoserine modification. Composition is skewed to basic and acidic residues over residues 470 to 486 (EARE…KRTP) and 494 to 506 (EPKK…EKQG). Position 485 is a phosphothreonine (Thr485). A Glycyl lysine isopeptide (Lys-Gly) (interchain with G-Cter in SUMO2) cross-link involves residue Lys496. The segment covering 508-550 (SRSGSSSSGSSSSNSRTSSTSSTVSSSSYSSSSGSSRTSSRSS) has biased composition (low complexity). Composition is skewed to basic residues over residues 551-579 (SPKR…YSRR), 587-598 (ARVKIRDRRRSN), and 607-639 (RRNR…SRDR). A compositionally biased stretch (basic and acidic residues) spans 659–721 (EAKEQERKKE…KRKRESERTF (63 aa)). Positions 673-703 (IDKDRKKKDKEREREQDKRKEKQKREEKDFK) form a coiled coil. Lys703 is covalently cross-linked (Glycyl lysine isopeptide (Lys-Gly) (interchain with G-Cter in SUMO2)). Ser726 is modified (phosphoserine). Positions 732–753 (IRHDSRQDSKKSTTKDSKKHSG) are enriched in basic and acidic residues. Low complexity predominate over residues 754 to 767 (SDSSGRSSSESPGS). Composition is skewed to basic residues over residues 771 to 781 (KKAKKPKHSRS) and 789 to 805 (RSGK…SRSR).

It belongs to the splicing factor SR family. Interacts with PNN. Expressed in heart, skeletal muscle, thymus, spleen, kidney, liver, placenta and leukocytes.

The protein resides in the nucleus speckle. This Homo sapiens (Human) protein is Arginine/serine-rich protein PNISR (PNISR).